The following is a 614-amino-acid chain: UvrABC system protein C (614 aa).

The GIY-YIG domain occupies 20-98 (TAPGVYRMYA…IKSLSPRYNV (79 aa)). The 36-residue stretch at 207–242 (DELTRELGEQMQAASEALEFEQAARLRDLISSLRSM) folds into the UVR domain.

This sequence belongs to the UvrC family. Interacts with UvrB in an incision complex.

The protein resides in the cytoplasm. In terms of biological role, the UvrABC repair system catalyzes the recognition and processing of DNA lesions. UvrC both incises the 5' and 3' sides of the lesion. The N-terminal half is responsible for the 3' incision and the C-terminal half is responsible for the 5' incision. This Stenotrophomonas maltophilia (strain R551-3) protein is UvrABC system protein C.